Here is a 231-residue protein sequence, read N- to C-terminus: UPF0173 metal-dependent hydrolase AF_1265 (231 aa).

It belongs to the UPF0173 family.

This is UPF0173 metal-dependent hydrolase AF_1265 from Archaeoglobus fulgidus (strain ATCC 49558 / DSM 4304 / JCM 9628 / NBRC 100126 / VC-16).